The following is a 435-amino-acid chain: 5-methylthioadenosine/S-adenosylhomocysteine deaminase (435 aa).

Residues His-65 and His-67 each coordinate Zn(2+). Substrate contacts are provided by Glu-94, Arg-150, and His-189. His-216 contacts Zn(2+). 2 residues coordinate substrate: Glu-219 and Asp-304. Asp-304 provides a ligand contact to Zn(2+).

This sequence belongs to the metallo-dependent hydrolases superfamily. MTA/SAH deaminase family. The cofactor is Zn(2+).

It catalyses the reaction S-adenosyl-L-homocysteine + H2O + H(+) = S-inosyl-L-homocysteine + NH4(+). The enzyme catalyses S-methyl-5'-thioadenosine + H2O + H(+) = S-methyl-5'-thioinosine + NH4(+). Catalyzes the deamination of 5-methylthioadenosine and S-adenosyl-L-homocysteine into 5-methylthioinosine and S-inosyl-L-homocysteine, respectively. Is also able to deaminate adenosine. The polypeptide is 5-methylthioadenosine/S-adenosylhomocysteine deaminase (Bacillus cereus (strain ZK / E33L)).